A 239-amino-acid polypeptide reads, in one-letter code: ATP-dependent dethiobiotin synthetase BioD (239 aa).

22–27 provides a ligand contact to ATP; sequence GIGKTV. Mg(2+) is bound at residue Thr-26. Lys-47 is an active-site residue. Thr-51 provides a ligand contact to substrate. ATP contacts are provided by residues Asp-59, 124–127, and 184–185; these read EGVG and NR. Mg(2+) contacts are provided by Asp-59 and Glu-124.

The protein belongs to the dethiobiotin synthetase family. As to quaternary structure, homodimer. Mg(2+) serves as cofactor.

The protein localises to the cytoplasm. It catalyses the reaction (7R,8S)-7,8-diammoniononanoate + CO2 + ATP = (4R,5S)-dethiobiotin + ADP + phosphate + 3 H(+). Its pathway is cofactor biosynthesis; biotin biosynthesis; biotin from 7,8-diaminononanoate: step 1/2. Functionally, catalyzes a mechanistically unusual reaction, the ATP-dependent insertion of CO2 between the N7 and N8 nitrogen atoms of 7,8-diaminopelargonic acid (DAPA, also called 7,8-diammoniononanoate) to form a ureido ring. The sequence is that of ATP-dependent dethiobiotin synthetase BioD from Chlorobaculum tepidum (strain ATCC 49652 / DSM 12025 / NBRC 103806 / TLS) (Chlorobium tepidum).